Reading from the N-terminus, the 61-residue chain is Conotoxin Cal14.6 (61 aa).

An N-terminal signal peptide occupies residues 1-21 (MKFLLFLSVALLLTSFIETEA). Positions 22–38 (GPVNEAGVERLFRALVG) are excised as a propeptide. Pro57 carries the post-translational modification 4-hydroxyproline; partial. At Pro60 the chain carries Proline amide.

Contains 2 disulfide bonds. Expressed by the venom duct.

The protein localises to the secreted. Its function is as follows. Probable neurotoxin with unknown target. Possibly targets ion channels. In Californiconus californicus (California cone), this protein is Conotoxin Cal14.6.